Consider the following 42-residue polypeptide: MQVEETLLKKKQTINANNILSFNRVAVAPYSYIALTPYGQKI.

The protein resides in the plastid. It is found in the chloroplast. This is an uncharacterized protein from Diacronema lutheri (Unicellular marine alga).